A 102-amino-acid polypeptide reads, in one-letter code: Putative pterin-4-alpha-carbinolamine dehydratase (102 aa).

It belongs to the pterin-4-alpha-carbinolamine dehydratase family.

It carries out the reaction (4aS,6R)-4a-hydroxy-L-erythro-5,6,7,8-tetrahydrobiopterin = (6R)-L-erythro-6,7-dihydrobiopterin + H2O. The chain is Putative pterin-4-alpha-carbinolamine dehydratase from Burkholderia ambifaria (strain ATCC BAA-244 / DSM 16087 / CCUG 44356 / LMG 19182 / AMMD) (Burkholderia cepacia (strain AMMD)).